Here is a 147-residue protein sequence, read N- to C-terminus: Large ribosomal subunit protein bL21 (147 aa).

The disordered stretch occupies residues 115-147 (KSIKVGKPTPKSSSKKEETVKKETKPKSEKSTN). Residues 128–147 (SKKEETVKKETKPKSEKSTN) show a composition bias toward basic and acidic residues.

The protein belongs to the bacterial ribosomal protein bL21 family. In terms of assembly, part of the 50S ribosomal subunit. Contacts protein L20.

In terms of biological role, this protein binds to 23S rRNA in the presence of protein L20. The protein is Large ribosomal subunit protein bL21 of Prochlorococcus marinus (strain MIT 9215).